The primary structure comprises 203 residues: Ribonuclease HII (203 aa).

The RNase H type-2 domain occupies 14–203 (GVIAGVDEVG…ILNSTKRALL (190 aa)). A divalent metal cation is bound by residues D20, E21, and D112.

Belongs to the RNase HII family. The cofactor is Mn(2+). Requires Mg(2+) as cofactor.

The protein localises to the cytoplasm. It catalyses the reaction Endonucleolytic cleavage to 5'-phosphomonoester.. Endonuclease that specifically degrades the RNA of RNA-DNA hybrids. This Wolbachia sp. subsp. Brugia malayi (strain TRS) protein is Ribonuclease HII.